The following is a 442-amino-acid chain: Trigger factor (442 aa).

Residues 165–250 enclose the PPIase FKBP-type domain; that stretch reads DDRVIIDFEG…LQKVMAPELP (86 aa).

Belongs to the FKBP-type PPIase family. Tig subfamily.

Its subcellular location is the cytoplasm. The enzyme catalyses [protein]-peptidylproline (omega=180) = [protein]-peptidylproline (omega=0). Involved in protein export. Acts as a chaperone by maintaining the newly synthesized protein in an open conformation. Functions as a peptidyl-prolyl cis-trans isomerase. The sequence is that of Trigger factor from Coxiella burnetii (strain CbuK_Q154) (Coxiella burnetii (strain Q154)).